A 418-amino-acid chain; its full sequence is (+)-T-muurolol synthase ((2E,6E)-farnesyl diphosphate cyclizing) (418 aa).

Aspartate 83 and aspartate 88 together coordinate Mg(2+). Positions 83–88 (DDEYCD) match the DDXXXD motif motif. A substrate-binding site is contributed by arginine 179. The Mg(2+) site is built by asparagine 225 and serine 229. Lysine 232 serves as a coordination point for substrate. Glutamate 233 contributes to the Mg(2+) binding site. Substrate is bound at residue 312–313 (RY). Positions 354–418 (LPEPGSDGAD…QQSTWRREHR (65 aa)) are disordered. The segment covering 402-412 (ASRSSGLQQST) has biased composition (polar residues).

It belongs to the terpene synthase family. Requires Mg(2+) as cofactor.

It carries out the reaction (2E,6E)-farnesyl diphosphate + H2O = (+)-T-muurolol + diphosphate. Its pathway is secondary metabolite biosynthesis; terpenoid biosynthesis. Catalyzes the conversion of (2E,6E)-farnesyl diphosphate (FPP) into (+)-T-muurolol via a 1,10-cyclization, which requires isomerization of FPP to nerolidyl diphosphate (NPP) and then abstraction of the pyrophosphate from intermediate NPP leading to a (E,Z)-germacradienyl (helminthogermacradienyl) cation. This Streptomyces clavuligerus protein is (+)-T-muurolol synthase ((2E,6E)-farnesyl diphosphate cyclizing).